The following is a 128-amino-acid chain: Putative transmembrane protein 244 (128 aa).

A run of 3 helical transmembrane segments spans residues 17–37 (FLLC…MGCV), 65–85 (VLLV…VPVV), and 93–113 (AISV…EFPL).

The protein localises to the membrane. This Homo sapiens (Human) protein is Putative transmembrane protein 244 (TMEM244).